Reading from the N-terminus, the 101-residue chain is Multivesicular body sorting factor 12 (101 aa).

An N-acetylmethionine modification is found at M1. Residue S94 is modified to Phosphoserine.

As to quaternary structure, component of the ESCRT-I complex (endosomal sorting complex required for transport I) which consists of STP22, VPS28, SRN2 and MVB12 in a 1:1:1:1 stoichiometry. Interacts with STP22 and SRN2.

It is found in the cytoplasm. Its subcellular location is the endosome. It localises to the late endosome membrane. Its function is as follows. Component of the ESCRT-I complex, a regulator of vesicular trafficking process. Binds to ubiquitinated cargo proteins and is required for the sorting of endocytic ubiquitinated cargos into multivesicular bodies (MVBs). Appears to be involved in cargo sorting and release of the ESCRT-I complex from the MVBs. The polypeptide is Multivesicular body sorting factor 12 (MVB12) (Saccharomyces cerevisiae (strain ATCC 204508 / S288c) (Baker's yeast)).